A 225-amino-acid chain; its full sequence is Cytidylate kinase (225 aa).

11–19 contributes to the ATP binding site; that stretch reads GPAAAGKST.

The protein belongs to the cytidylate kinase family. Type 1 subfamily.

It localises to the cytoplasm. It carries out the reaction CMP + ATP = CDP + ADP. The enzyme catalyses dCMP + ATP = dCDP + ADP. This chain is Cytidylate kinase, found in Bacillus anthracis (strain A0248).